The primary structure comprises 253 residues: POU Class 2 homeobox-associating factor 3 (253 aa).

The region spanning 5-27 (PKVYQGVRVKMTVKELLQQRRAH) is the OCA domain.

The protein belongs to the POU2AF family. In terms of assembly, interacts with POU2F3 in a DNA-dependent manner; this interaction increases POU2F3 transactivation activity. Expressed in tuft cells.

The protein localises to the cytoplasm. The protein resides in the nucleus. Transcriptional coactivator that specifically associates with POU2F3. This complex drives the development of tuft cells, a rare a rare chemosensory cells that coordinate immune and neural functions within mucosal epithelial tissues. The sequence is that of POU Class 2 homeobox-associating factor 3 from Mus musculus (Mouse).